Here is a 146-residue protein sequence, read N- to C-terminus: DNA-directed RNA polymerases II, IV and V subunit 8B (146 aa).

It belongs to the eukaryotic RPB8 RNA polymerase subunit family. In terms of assembly, component of the RNA polymerase II, IV and V complexes. Associates with the mediator complex.

The protein localises to the nucleus. DNA-dependent RNA polymerase catalyzes the transcription of DNA into RNA using the four ribonucleoside triphosphates as substrates. Component of RNA polymerase II which synthesizes mRNA precursors and many functional non-coding RNAs. Pol II is the central component of the basal RNA polymerase II transcription machinery. It is composed of mobile elements that move relative to each other. Component of RNA polymerases IV and V which mediate short-interfering RNAs (siRNA) accumulation and subsequent RNA-directed DNA methylation-dependent (RdDM) transcriptional gene silencing (TGS) of endogenous repeated sequences, including transposable elements. In Arabidopsis thaliana (Mouse-ear cress), this protein is DNA-directed RNA polymerases II, IV and V subunit 8B (NRPB8B).